The primary structure comprises 650 residues: Protein kinase domain-containing protein ppk38 (650 aa).

In terms of domain architecture, Protein kinase spans 33–315 (VTVKRYLAEG…MRNVPIHIYD (283 aa)). Disordered regions lie at residues 344 to 442 (IHQS…PTTP), 517 to 571 (KVAA…PTNM), and 591 to 616 (RRVSKPEKEHTNPNAEQGDVIPEKPM). 2 stretches are compositionally biased toward polar residues: residues 369–415 (NVNS…NFRV) and 533–554 (SVENPQNNISAPTPSSLQSSNA).

The polypeptide is Protein kinase domain-containing protein ppk38 (ppk38) (Schizosaccharomyces pombe (strain 972 / ATCC 24843) (Fission yeast)).